Consider the following 378-residue polypeptide: Erythronate-4-phosphate dehydrogenase (378 aa).

Residues Ser45 and Thr67 each contribute to the substrate site. Asp147 provides a ligand contact to NAD(+). Arg209 is an active-site residue. NAD(+) is bound at residue Asp233. Glu238 is an active-site residue. His255 (proton donor) is an active-site residue. Position 258 (Gly258) interacts with NAD(+). Tyr259 provides a ligand contact to substrate.

Belongs to the D-isomer specific 2-hydroxyacid dehydrogenase family. PdxB subfamily. As to quaternary structure, homodimer.

It localises to the cytoplasm. The catalysed reaction is 4-phospho-D-erythronate + NAD(+) = (R)-3-hydroxy-2-oxo-4-phosphooxybutanoate + NADH + H(+). It functions in the pathway cofactor biosynthesis; pyridoxine 5'-phosphate biosynthesis; pyridoxine 5'-phosphate from D-erythrose 4-phosphate: step 2/5. Its function is as follows. Catalyzes the oxidation of erythronate-4-phosphate to 3-hydroxy-2-oxo-4-phosphonooxybutanoate. The chain is Erythronate-4-phosphate dehydrogenase from Shewanella denitrificans (strain OS217 / ATCC BAA-1090 / DSM 15013).